The following is a 208-amino-acid chain: Protein-L-isoaspartate O-methyltransferase (208 aa).

Ser-59 is a catalytic residue.

Belongs to the methyltransferase superfamily. L-isoaspartyl/D-aspartyl protein methyltransferase family.

It is found in the cytoplasm. It carries out the reaction [protein]-L-isoaspartate + S-adenosyl-L-methionine = [protein]-L-isoaspartate alpha-methyl ester + S-adenosyl-L-homocysteine. Its function is as follows. Catalyzes the methyl esterification of L-isoaspartyl residues in peptides and proteins that result from spontaneous decomposition of normal L-aspartyl and L-asparaginyl residues. It plays a role in the repair and/or degradation of damaged proteins. This is Protein-L-isoaspartate O-methyltransferase from Sodalis glossinidius (strain morsitans).